A 126-amino-acid polypeptide reads, in one-letter code: Nucleoside diphosphate kinase B (126 aa).

Residues lysine 6, phenylalanine 37, threonine 68, arginine 79, and asparagine 89 each contribute to the ATP site. The active-site Pros-phosphohistidine intermediate is histidine 92.

The protein belongs to the NDK family. Requires Mg(2+) as cofactor.

The protein resides in the cytoplasm. It localises to the nucleus. The protein localises to the cell projection. It is found in the lamellipodium. Its subcellular location is the ruffle. It catalyses the reaction a 2'-deoxyribonucleoside 5'-diphosphate + ATP = a 2'-deoxyribonucleoside 5'-triphosphate + ADP. It carries out the reaction a ribonucleoside 5'-diphosphate + ATP = a ribonucleoside 5'-triphosphate + ADP. Major role in the synthesis of nucleoside triphosphates other than ATP. This Merluccius capensis (Shallow-water Cape hake) protein is Nucleoside diphosphate kinase B (nme2).